A 280-amino-acid chain; its full sequence is Phosphatidylinositol N-acetylglucosaminyltransferase GPI2 subunit (280 aa).

Over 1–53 (MTRSPWKRLLWLKQEYPDNYTDPSFIELRARQKAESNQKSDRKLSEAARAQIR) the chain is Cytoplasmic. Residues 54–74 (LDFISFYQTILNTSFIYITFT) traverse the membrane as a helical segment. A topological domain (extracellular) is located at residue tyrosine 75. A helical membrane pass occupies residues 76–96 (IYYYGFDPIPPTIFLSFITLI). Residues 97–108 (ISRTKVDPLLSS) lie on the Cytoplasmic side of the membrane. A helical membrane pass occupies residues 109–129 (FMDVKSSLIITFAMLTLSPVL). At 130 to 135 (KSLSKT) the chain is on the extracellular side. Residues 136 to 156 (TASDSIWTLSFWLTLWYIFVI) traverse the membrane as a helical segment. Residues 157–189 (SSTKSKDKPSNLSTNILVALVAVLSSRLSTTID) are Cytoplasmic-facing. A helical membrane pass occupies residues 190 to 210 (VFCFLLICIQLNIILPTYLSV). The Extracellular segment spans residues 211 to 220 (TNKVVPIISN). The helical transmembrane segment at 221–241 (IIVYSFLNVALGWIYMLLIFF) threads the bilayer. Residues 242-280 (ASVFYITVLPKWFIYWKINYHKRDNDLLSTWDARTPILD) lie on the Cytoplasmic side of the membrane.

This sequence belongs to the PIGC family. Component of the phosphatidylinositol N-acetylglucosaminyltransferase (GPI-GlcNAc transferase) complex composed of at least GPI1, GPI2, GPI3, GPI15, GPI19 and ERI1. Interacts with ERI1.

The protein localises to the membrane. The catalysed reaction is a 1,2-diacyl-sn-glycero-3-phospho-(1D-myo-inositol) + UDP-N-acetyl-alpha-D-glucosamine = a 6-(N-acetyl-alpha-D-glucosaminyl)-1-(1,2-diacyl-sn-glycero-3-phospho)-1D-myo-inositol + UDP + H(+). It participates in glycolipid biosynthesis; glycosylphosphatidylinositol-anchor biosynthesis. In terms of biological role, part of the complex catalyzing the transfer of N-acetylglucosamine from UDP-N-acetylglucosamine to phosphatidylinositol, the first step of GPI biosynthesis. The polypeptide is Phosphatidylinositol N-acetylglucosaminyltransferase GPI2 subunit (GPI2) (Saccharomyces cerevisiae (strain ATCC 204508 / S288c) (Baker's yeast)).